We begin with the raw amino-acid sequence, 367 residues long: Regulator of fusion ref-1 (367 aa).

Residues 1 to 10 (MVLISTPPPA) are compositionally biased toward pro residues. The segment at 1 to 24 (MVLISTPPPAYAHNRKTSQEKKRR) is disordered. The tract at residues 11–24 (YAHNRKTSQEKKRR) is basic motif 1. The region spanning 11 to 63 (YAHNRKTSQEKKRRDEINAKIKELQLLIQNESDNEKMTQGDVLNRAVEVVSRM) is the bHLH 1 domain. Residues 25–63 (DEINAKIKELQLLIQNESDNEKMTQGDVLNRAVEVVSRM) are helix-loop-helix motif 1. Disordered regions lie at residues 133–177 (RSES…RRDR) and 313–367 (ATSP…RPWE). The span at 141–157 (SSMSYRSQSSSPSTSES) shows a compositional bias: low complexity. Basic and acidic residues predominate over residues 161-177 (IDRKEVKKNREQDRRDR). The tract at residues 162–175 (DRKEVKKNREQDRR) is basic motif 2. The bHLH 2 domain maps to 162-219 (DRKEVKKNREQDRRDRQGEAFDALKNFIIENKLMTSHQVEKMQRLNTLDIIIAYIQNK). The tract at residues 176 to 219 (DRQGEAFDALKNFIIENKLMTSHQVEKMQRLNTLDIIIAYIQNK) is helix-loop-helix motif 2. Residues 313–354 (ATSPKSQQSPSYSLDSPPPSSDTSSSSIETPSTPNENSNSNP) show a composition bias toward low complexity. The segment covering 356-367 (ASRKSKLFRPWE) has biased composition (basic residues).

As to quaternary structure, interacts with unc-37.

The protein resides in the nucleus. Probable transcription factor. Binds 5'-TGCCACGTGTCCA-3' in vitro, probably via the E-box motif 5'-CA[TC][AG]TG-3'. Acts in embryonic development in a Notch-dependent manner, perhaps as a direct target of transcriptional regulator lag-1 in the Notch signaling pathway. Also acts in embryonic development in a Notch-independent manner. Plays a role in both Notch-dependent and -independent pathways in the execution of neuronal lineage decisions in the embryo. Also involved in regulating cell fate leading to formation of neuronal structures known as postdeirids. Involved in the pattern of cell fusion with a large syncytium known as hyp-7, during larval development, in hermaphrodites. Plays a role in regulating the activity of homeobox protein mab-5 in Pn.p cells. This chain is Regulator of fusion ref-1, found in Caenorhabditis elegans.